We begin with the raw amino-acid sequence, 317 residues long: NAD-dependent protein deacetylase Sirt6 (317 aa).

One can recognise a Deacetylase sirtuin-type domain in the interval 27–273 (DEVVAEKCQE…SKVCKLLGVE (247 aa)). Residues Ala-53, Thr-57, Phe-64, Arg-65, Trp-71, Gln-113, and His-133 each coordinate NAD(+). The active-site Proton acceptor is the His-133. Zn(2+) contacts are provided by Cys-141, Cys-144, Cys-166, and Cys-177. NAD(+) contacts are provided by Gly-215, Asn-241, Gln-243, and Val-259.

This sequence belongs to the sirtuin family. Class IV subfamily. Zn(2+) serves as cofactor. As to expression, widely expressed.

The protein localises to the nucleus. The protein resides in the chromosome. The catalysed reaction is N(6)-acetyl-L-lysyl-[protein] + NAD(+) + H2O = 2''-O-acetyl-ADP-D-ribose + nicotinamide + L-lysyl-[protein]. Functionally, NAD-dependent histone deacylase that acts as a regulator of life span. This chain is NAD-dependent protein deacetylase Sirt6, found in Drosophila melanogaster (Fruit fly).